Here is a 66-residue protein sequence, read N- to C-terminus: Alpha-actitoxin-Ms11a-2 (66 aa).

Positions 1–24 (MASKIFFVLAVFLVMSAVLPESFA) are cleaved as a signal peptide. Disulfide bonds link Cys26–Cys41, Cys33–Cys46, and Cys40–Cys61.

The protein resides in the secreted. The protein localises to the nematocyst. Alpha-toxins act on postsynaptic membranes, they bind to the nicotinic acetylcholine receptors (nAChR) and thus inhibit them. This toxin competes with alpha-bungarotoxin for binding to orthosteric sites on muscle-type T.carlifornicus (IC(50)=1080 nM) and human alpha-7/CHRNA7 nAChRs (IC(50)=14.13 uM). This is Alpha-actitoxin-Ms11a-2 from Metridium senile (Brown sea anemone).